Consider the following 105-residue polypeptide: MVKQIESKYAFQEALNSAGEKLVVVDFSATWCGPCKMIKPFFHSLSEKYSNVVFLEVDVDDCQDVAAECEVKCMPTFQFFKKGQKVGEFSGANKEKLEATINELI.

The 104-residue stretch at 2–105 (VKQIESKYAF…KLEATINELI (104 aa)) folds into the Thioredoxin domain. Lys-3 is subject to N6-acetyllysine. Lys-8 bears the N6-succinyllysine mark. Active-site nucleophile residues include Cys-32 and Cys-35. Cys-32 and Cys-35 are oxidised to a cystine. N6-acetyllysine is present on Lys-39. S-nitrosocysteine occurs at positions 62 and 69. At Cys-73 the chain carries S-nitrosocysteine; alternate. N6-acetyllysine; alternate is present on Lys-94. Lys-94 is subject to N6-succinyllysine; alternate.

It belongs to the thioredoxin family. In terms of assembly, homodimer; disulfide-linked. Interacts with TXNIP through the redox-active site. Interacts with MAP3K5 and CASP3. Interacts with APEX1; the interaction stimulates the FOS/JUN AP-1 DNA-binding activity in a redox-dependent manner. In terms of processing, in the fully reduced protein, both Cys-69 and Cys-73 are nitrosylated in response to nitric oxide (NO). When two disulfide bonds are present in the protein, only Cys-73 is nitrosylated. Cys-73 can serve as donor for nitrosylation of target proteins.

It localises to the nucleus. Its subcellular location is the cytoplasm. It is found in the secreted. Functionally, participates in various redox reactions through the reversible oxidation of its active center dithiol to a disulfide and catalyzes dithiol-disulfide exchange reactions. Plays a role in the reversible S-nitrosylation of cysteine residues in target proteins, and thereby contributes to the response to intracellular nitric oxide. Nitrosylates the active site Cys of CASP3 in response to nitric oxide (NO), and thereby inhibits caspase-3 activity. Induces the FOS/JUN AP-1 DNA binding activity in ionizing radiation (IR) cells through its oxidation/reduction status and stimulates AP-1 transcriptional activity. The protein is Thioredoxin (TXN) of Bos taurus (Bovine).